Here is a 220-residue protein sequence, read N- to C-terminus: Deoxyribose-phosphate aldolase (220 aa).

Residue Asp89 is the Proton donor/acceptor of the active site. The active-site Schiff-base intermediate with acetaldehyde is the Lys151. Lys180 serves as the catalytic Proton donor/acceptor.

The protein belongs to the DeoC/FbaB aldolase family. DeoC type 1 subfamily.

The protein localises to the cytoplasm. It catalyses the reaction 2-deoxy-D-ribose 5-phosphate = D-glyceraldehyde 3-phosphate + acetaldehyde. Its pathway is carbohydrate degradation; 2-deoxy-D-ribose 1-phosphate degradation; D-glyceraldehyde 3-phosphate and acetaldehyde from 2-deoxy-alpha-D-ribose 1-phosphate: step 2/2. In terms of biological role, catalyzes a reversible aldol reaction between acetaldehyde and D-glyceraldehyde 3-phosphate to generate 2-deoxy-D-ribose 5-phosphate. This is Deoxyribose-phosphate aldolase from Staphylococcus haemolyticus (strain JCSC1435).